Reading from the N-terminus, the 607-residue chain is Guanine nucleotide-binding protein-like 1 (607 aa).

Positions 1 to 14 are enriched in basic residues; the sequence is MPRKKPFSVKQKKK. The interval 1-81 is disordered; the sequence is MPRKKPFSVK…GPRGYDPNRY (81 aa). Residues 15 to 26 show a composition bias toward basic and acidic residues; it reads QLQDKRERKRGL. A phosphoserine mark is found at serine 32, serine 33, and serine 34. A phosphothreonine mark is found at threonine 48 and threonine 50. Phosphoserine is present on residues serine 51 and serine 68. A CP-type G domain is found at 178 to 418; sequence WRQLWRVLEM…LCDCPGLIFP (241 aa). Residue 225–228 participates in GTP binding; it reads NKVD. The residue at position 324 (serine 324) is a Phosphoserine. GTP contacts are provided by residues 367-374 and 411-415; these read GFPNVGKS and DCPGL. Residues 547–607 are disordered; it reads GPAGDEEEEE…PYALLGEDEC (61 aa). The span at 550-584 shows a compositional bias: acidic residues; it reads GDEEEEEEEELSSSCEEEGEEDRDADEEGEGDEDT. Residues serine 561, serine 562, and serine 563 each carry the phosphoserine modification.

It belongs to the TRAFAC class YlqF/YawG GTPase family.

Functionally, possible regulatory or functional link with the histocompatibility cluster. The chain is Guanine nucleotide-binding protein-like 1 (GNL1) from Pongo abelii (Sumatran orangutan).